Consider the following 67-residue polypeptide: Large ribosomal subunit protein uL29 (67 aa).

The protein belongs to the universal ribosomal protein uL29 family.

The protein is Large ribosomal subunit protein uL29 of Ehrlichia canis (strain Jake).